The sequence spans 960 residues: Isoleucine--tRNA ligase (960 aa).

The 'HIGH' region motif lies at 60–70; that stretch reads PYANGSLHIGH. Glutamate 573 provides a ligand contact to L-isoleucyl-5'-AMP. The 'KMSKS' region signature appears at 614–618; the sequence is KMSKS. Lysine 617 is an ATP binding site. Zn(2+)-binding residues include cysteine 929, cysteine 932, cysteine 949, and cysteine 952.

This sequence belongs to the class-I aminoacyl-tRNA synthetase family. IleS type 1 subfamily. As to quaternary structure, monomer. Zn(2+) is required as a cofactor.

The protein resides in the cytoplasm. It carries out the reaction tRNA(Ile) + L-isoleucine + ATP = L-isoleucyl-tRNA(Ile) + AMP + diphosphate. Functionally, catalyzes the attachment of isoleucine to tRNA(Ile). As IleRS can inadvertently accommodate and process structurally similar amino acids such as valine, to avoid such errors it has two additional distinct tRNA(Ile)-dependent editing activities. One activity is designated as 'pretransfer' editing and involves the hydrolysis of activated Val-AMP. The other activity is designated 'posttransfer' editing and involves deacylation of mischarged Val-tRNA(Ile). The polypeptide is Isoleucine--tRNA ligase (Nostoc sp. (strain PCC 7120 / SAG 25.82 / UTEX 2576)).